The primary structure comprises 107 residues: Ferredoxin (107 aa).

4Fe-4S ferredoxin-type domains follow at residues 2–30 and 31–60; these read TYVVTDECVKCKYTDCVEVCPVDCFYEGE and FMLVINPDECIDCGVCVPDCPIDAIKPETP. Positions 9 and 17 each coordinate [3Fe-4S] cluster. Positions 21, 40, 43, and 46 each coordinate [4Fe-4S] cluster. Cysteine 50 serves as a coordination point for [3Fe-4S] cluster.

Requires [4Fe-4S] cluster as cofactor. [3Fe-4S] cluster is required as a cofactor.

In terms of biological role, ferredoxins are iron-sulfur proteins that transfer electrons in a wide variety of metabolic reactions. This chain is Ferredoxin (fdxA), found in Rickettsia bellii (strain RML369-C).